The chain runs to 689 residues: Glycine--tRNA ligase beta subunit (689 aa).

This sequence belongs to the class-II aminoacyl-tRNA synthetase family. In terms of assembly, tetramer of two alpha and two beta subunits.

Its subcellular location is the cytoplasm. It carries out the reaction tRNA(Gly) + glycine + ATP = glycyl-tRNA(Gly) + AMP + diphosphate. This Yersinia pseudotuberculosis serotype O:1b (strain IP 31758) protein is Glycine--tRNA ligase beta subunit.